A 499-amino-acid polypeptide reads, in one-letter code: Glycerol kinase (499 aa).

T17 contacts ADP. 3 residues coordinate ATP: T17, T18, and S19. T17 is a binding site for sn-glycerol 3-phosphate. ADP is bound at residue R21. 4 residues coordinate sn-glycerol 3-phosphate: R87, E88, Y139, and D243. Glycerol-binding residues include R87, E88, Y139, D243, and Q244. Residues T265 and G308 each coordinate ADP. Positions 265, 308, 312, and 409 each coordinate ATP. Residues G409 and N413 each coordinate ADP.

This sequence belongs to the FGGY kinase family.

It carries out the reaction glycerol + ATP = sn-glycerol 3-phosphate + ADP + H(+). It participates in polyol metabolism; glycerol degradation via glycerol kinase pathway; sn-glycerol 3-phosphate from glycerol: step 1/1. With respect to regulation, inhibited by fructose 1,6-bisphosphate (FBP). In terms of biological role, key enzyme in the regulation of glycerol uptake and metabolism. Catalyzes the phosphorylation of glycerol to yield sn-glycerol 3-phosphate. The sequence is that of Glycerol kinase from Pseudomonas putida (strain GB-1).